Here is a 78-residue protein sequence, read N- to C-terminus: Exodeoxyribonuclease 7 small subunit (78 aa).

Belongs to the XseB family. In terms of assembly, heterooligomer composed of large and small subunits.

It is found in the cytoplasm. The catalysed reaction is Exonucleolytic cleavage in either 5'- to 3'- or 3'- to 5'-direction to yield nucleoside 5'-phosphates.. In terms of biological role, bidirectionally degrades single-stranded DNA into large acid-insoluble oligonucleotides, which are then degraded further into small acid-soluble oligonucleotides. The polypeptide is Exodeoxyribonuclease 7 small subunit (Desulfitobacterium hafniense (strain Y51)).